The primary structure comprises 130 residues: Small ribosomal subunit protein uS9 (130 aa).

Residues 109–130 (RKKERKKYGQRAARARFQYSKR) form a disordered region.

This sequence belongs to the universal ribosomal protein uS9 family.

The polypeptide is Small ribosomal subunit protein uS9 (Oleidesulfovibrio alaskensis (strain ATCC BAA-1058 / DSM 17464 / G20) (Desulfovibrio alaskensis)).